The following is a 263-amino-acid chain: (R)-S-adenosyl-L-methionine hydrolase (263 aa).

Residues aspartate 18, aspartate 82, and asparagine 181 each contribute to the adenosine site. Residues asparagine 181, tyrosine 221, serine 234, glutamate 239, and methionine 244 each contribute to the (R)-S-adenosyl-L-methionine site.

This sequence belongs to the SAM hydrolase / SAM-dependent halogenase family. In terms of assembly, homotrimer.

The catalysed reaction is (R)-S-adenosyl-L-methionine + H2O = adenosine + L-methionine + H(+). Functionally, catalyzes the hydrolysis of S-adenosyl-L-methionine (SAM) into adenosine and L-methionine. Does not have chlorinase or fluorinase activity. In Methanocaldococcus jannaschii (strain ATCC 43067 / DSM 2661 / JAL-1 / JCM 10045 / NBRC 100440) (Methanococcus jannaschii), this protein is (R)-S-adenosyl-L-methionine hydrolase.